Consider the following 280-residue polypeptide: Putative protein-tyrosine sulfotransferase (280 aa).

R16–T20 is a binding site for 3'-phosphoadenylyl sulfate. C34 and C89 are oxidised to a cystine. The Proton donor/acceptor role is filled by E37. Residue N57 is glycosylated (N-linked (GlcNAc...) asparagine). Residues R116, S124, and R128 each coordinate 3'-phosphoadenylyl sulfate. A glycan (N-linked (GlcNAc...) asparagine) is linked at N136. C158 and C165 form a disulfide bridge. Residues Y170 and S215 to N224 each bind 3'-phosphoadenylyl sulfate.

This sequence belongs to the protein sulfotransferase family.

It catalyses the reaction L-tyrosyl-[protein] + 3'-phosphoadenylyl sulfate = O-sulfo-L-tyrosine-[protein] + adenosine 3',5'-bisphosphate + H(+). In terms of biological role, catalyzes the O-sulfation of tyrosine residues within acidic motifs of polypeptides, using 3'-phosphoadenylyl sulfate (PAPS) as cosubstrate. This Caenorhabditis briggsae protein is Putative protein-tyrosine sulfotransferase.